Consider the following 144-residue polypeptide: Putative pre-16S rRNA nuclease (144 aa).

The protein belongs to the YqgF nuclease family.

It is found in the cytoplasm. Could be a nuclease involved in processing of the 5'-end of pre-16S rRNA. The protein is Putative pre-16S rRNA nuclease of Oleidesulfovibrio alaskensis (strain ATCC BAA-1058 / DSM 17464 / G20) (Desulfovibrio alaskensis).